Consider the following 160-residue polypeptide: MHILKKPDLTDPKLRAKLAKGMGHNYYGEPAWPNDLLYIFPVVILGTIACIVGLSVLDPAMLGDKADPFATPLEILPEWYLYPVFQILRVVPNKLLGIALQTLVPLGLMLIPFIESFNKFQNPFRRPIAMAVFLFGTATTIYLGIGAAMPIDKSLTLGLF.

3 helical membrane passes run 36 to 56, 95 to 115, and 128 to 148; these read LLYIFPVVILGTIACIVGLSV, LLGIALQTLVPLGLMLIPFIE, and IAMAVFLFGTATTIYLGIGAA.

Belongs to the cytochrome b family. PetD subfamily. As to quaternary structure, the 4 large subunits of the cytochrome b6-f complex are cytochrome b6, subunit IV (17 kDa polypeptide, PetD), cytochrome f and the Rieske protein, while the 4 small subunits are PetG, PetL, PetM and PetN. The complex functions as a dimer.

The protein localises to the cellular thylakoid membrane. In terms of biological role, component of the cytochrome b6-f complex, which mediates electron transfer between photosystem II (PSII) and photosystem I (PSI), cyclic electron flow around PSI, and state transitions. This Synechococcus sp. (strain CC9311) protein is Cytochrome b6-f complex subunit 4.